A 171-amino-acid polypeptide reads, in one-letter code: MKILGIDPGSRITGYGVISKEGNRLIHVDNGAIFTDKAKDFPARLERIYRGLAEIIETYRPDAVAVENIFFSNNVQSALKLGQARGAAIVAGVIAGLPVFEYTALQVKQAVVGNGKAAKQQVQQMIKVLLNLPEIAQEDASDALAVAVCHANSSVLSGMLKIMDKVGKTNA.

Residues aspartate 7, glutamate 67, and aspartate 139 contribute to the active site. Residues aspartate 7, glutamate 67, and aspartate 139 each coordinate Mg(2+).

This sequence belongs to the RuvC family. Homodimer which binds Holliday junction (HJ) DNA. The HJ becomes 2-fold symmetrical on binding to RuvC with unstacked arms; it has a different conformation from HJ DNA in complex with RuvA. In the full resolvosome a probable DNA-RuvA(4)-RuvB(12)-RuvC(2) complex forms which resolves the HJ. Requires Mg(2+) as cofactor.

It localises to the cytoplasm. The enzyme catalyses Endonucleolytic cleavage at a junction such as a reciprocal single-stranded crossover between two homologous DNA duplexes (Holliday junction).. In terms of biological role, the RuvA-RuvB-RuvC complex processes Holliday junction (HJ) DNA during genetic recombination and DNA repair. Endonuclease that resolves HJ intermediates. Cleaves cruciform DNA by making single-stranded nicks across the HJ at symmetrical positions within the homologous arms, yielding a 5'-phosphate and a 3'-hydroxyl group; requires a central core of homology in the junction. The consensus cleavage sequence is 5'-(A/T)TT(C/G)-3'. Cleavage occurs on the 3'-side of the TT dinucleotide at the point of strand exchange. HJ branch migration catalyzed by RuvA-RuvB allows RuvC to scan DNA until it finds its consensus sequence, where it cleaves and resolves the cruciform DNA. The polypeptide is Crossover junction endodeoxyribonuclease RuvC (Geotalea uraniireducens (strain Rf4) (Geobacter uraniireducens)).